A 239-amino-acid chain; its full sequence is DNA repair protein RecO (239 aa).

This sequence belongs to the RecO family.

Involved in DNA repair and RecF pathway recombination. This is DNA repair protein RecO from Bifidobacterium longum (strain DJO10A).